Here is a 315-residue protein sequence, read N- to C-terminus: Acetaldehyde dehydrogenase (315 aa).

Ser-13–Ile-16 contacts NAD(+). Cys-143 (acyl-thioester intermediate) is an active-site residue. Residues Ser-174–Asn-182 and Asn-285 each bind NAD(+).

Belongs to the acetaldehyde dehydrogenase family.

The catalysed reaction is acetaldehyde + NAD(+) + CoA = acetyl-CoA + NADH + H(+). This is Acetaldehyde dehydrogenase from Shewanella woodyi (strain ATCC 51908 / MS32).